The chain runs to 121 residues: MKEVIAIIRPKNMKKTRDVLESLGFPSFNATRVLGRGKQRAIIDEVTIPSPSPEIDEVRGTMRYIPKRMIQITVEDPDVQLVVEAIMKVNHTGKIGDGKIFVCPVDDAMRIRTGDRGTEAL.

This sequence belongs to the P(II) protein family.

Could be involved in the regulation of nitrogen fixation. The sequence is that of Nitrogen fixation nifHD region GlnB-like protein 2 (glnBB) from Methanothermobacter marburgensis (strain ATCC BAA-927 / DSM 2133 / JCM 14651 / NBRC 100331 / OCM 82 / Marburg) (Methanobacterium thermoautotrophicum).